An 845-amino-acid chain; its full sequence is G-type lectin S-receptor-like serine/threonine-protein kinase At1g11410 (845 aa).

An N-terminal signal peptide occupies residues 1 to 21 (MKFFFIFFIFLFSFLIQSCYS). Residues 22–147 (DNTILRSQSL…VTGKSFWESF (126 aa)) form the Bulb-type lectin domain. Residues 22–441 (DNTILRSQSL…NGNGASGKKR (420 aa)) are Extracellular-facing. Residues asparagine 82, asparagine 103, asparagine 185, asparagine 231, and asparagine 259 are each glycosylated (N-linked (GlcNAc...) asparagine). Residues 283-321 (PEDKCDIYNHCGFNGYCDSTSTEKFECSCLPGYEPKTPR) enclose the EGF-like domain. Disulfide bonds link cysteine 287-cysteine 299 and cysteine 293-cysteine 309. The region spanning 341-424 (CNGKEGFAKL…SGQDFYLRVD (84 aa)) is the PAN domain. N-linked (GlcNAc...) asparagine glycans are attached at residues asparagine 357, asparagine 366, and asparagine 379. Intrachain disulfides connect cysteine 372-cysteine 399 and cysteine 376-cysteine 382. The helical transmembrane segment at 442-462 (LVLILISLIAVVMLLLISFHC) threads the bilayer. Over 463–845 (YLRKRRQRTQ…DVTLTDVQGR (383 aa)) the chain is Cytoplasmic. The Protein kinase domain occupies 523 to 808 (FAFQNKLGAG…DLPSPKHPAF (286 aa)). ATP contacts are provided by residues 529 to 537 (LGAGGFGPV) and lysine 551. A caM-binding region spans residues 612–629 (EQRAELDWPKRMGIIRGI). Aspartate 648 acts as the Proton acceptor in catalysis. The tract at residues 803–845 (PKHPAFTAGRRRNTKTGGSSDNWPSGETSSTINDVTLTDVQGR) is disordered. The span at 817-845 (KTGGSSDNWPSGETSSTINDVTLTDVQGR) shows a compositional bias: polar residues.

This sequence belongs to the protein kinase superfamily. Ser/Thr protein kinase family.

Its subcellular location is the cell membrane. The catalysed reaction is L-seryl-[protein] + ATP = O-phospho-L-seryl-[protein] + ADP + H(+). It catalyses the reaction L-threonyl-[protein] + ATP = O-phospho-L-threonyl-[protein] + ADP + H(+). This chain is G-type lectin S-receptor-like serine/threonine-protein kinase At1g11410, found in Arabidopsis thaliana (Mouse-ear cress).